A 207-amino-acid chain; its full sequence is Large ribosomal subunit protein bL25 (207 aa).

The protein belongs to the bacterial ribosomal protein bL25 family. CTC subfamily. In terms of assembly, part of the 50S ribosomal subunit; part of the 5S rRNA/L5/L18/L25 subcomplex. Contacts the 5S rRNA. Binds to the 5S rRNA independently of L5 and L18.

This is one of the proteins that binds to the 5S RNA in the ribosome where it forms part of the central protuberance. This is Large ribosomal subunit protein bL25 from Dictyoglomus thermophilum (strain ATCC 35947 / DSM 3960 / H-6-12).